The following is a 391-amino-acid chain: Testis-expressed protein 9 (391 aa).

Disordered stretches follow at residues 1-31 and 65-85; these read MAGR…PGPD and QEVR…EDDY. Residues 188 to 351 adopt a coiled-coil conformation; it reads IGTEAQIRFL…EKQKGELMIG (164 aa).

The protein resides in the cytoplasm. The protein localises to the cytoskeleton. It localises to the microtubule organizing center. It is found in the centrosome. Its subcellular location is the centriolar satellite. The sequence is that of Testis-expressed protein 9 (TEX9) from Homo sapiens (Human).